The chain runs to 188 residues: Mitochondrial import receptor subunit TOM20 homolog (188 aa).

Topologically, residues 1 to 12 (MSDTILGFNKSN) are mitochondrial intermembrane. Residues 13–31 (VVLAAGIAGAAFLGYCIYF) form a helical membrane-spanning segment. Residues 32 to 188 (DHKRINAPDY…ELIDDTDDLE (157 aa)) lie on the Cytoplasmic side of the membrane. Disordered stretches follow at residues 42 to 73 (KDKIRQKRRAQAGAGGMAPRRPAAAGNDAAPD) and 156 to 188 (DEAENEPPMVQYLGDGPPPAQIQELIDDTDDLE). Residues 58-67 (MAPRRPAAAG) show a composition bias toward low complexity.

This sequence belongs to the Tom20 family. Forms part of the preprotein translocase complex of the outer mitochondrial membrane (TOM complex).

It is found in the mitochondrion outer membrane. Its function is as follows. Central component of the receptor complex responsible for the recognition and translocation of cytosolically synthesized mitochondrial preproteins. Together with tomm-22 functions as the transit peptide receptor at the surface of the mitochondrion outer membrane and facilitates the movement of preproteins into the translocation pore. This Caenorhabditis elegans protein is Mitochondrial import receptor subunit TOM20 homolog.